The primary structure comprises 839 residues: DNA gyrase subunit A (839 aa).

The 465-residue stretch at 46 to 510 folds into the Topo IIA-type catalytic domain; that stretch reads LPDARDGLKP…ISEDIDDEDL (465 aa). The active-site O-(5'-phospho-DNA)-tyrosine intermediate is tyrosine 134. The GyrA-box signature appears at 537–543; sequence QHRGGVG.

Belongs to the type II topoisomerase GyrA/ParC subunit family. As to quaternary structure, heterotetramer, composed of two GyrA and two GyrB chains. In the heterotetramer, GyrA contains the active site tyrosine that forms a transient covalent intermediate with DNA, while GyrB binds cofactors and catalyzes ATP hydrolysis.

It localises to the cytoplasm. The enzyme catalyses ATP-dependent breakage, passage and rejoining of double-stranded DNA.. In terms of biological role, a type II topoisomerase that negatively supercoils closed circular double-stranded (ds) DNA in an ATP-dependent manner to modulate DNA topology and maintain chromosomes in an underwound state. Negative supercoiling favors strand separation, and DNA replication, transcription, recombination and repair, all of which involve strand separation. Also able to catalyze the interconversion of other topological isomers of dsDNA rings, including catenanes and knotted rings. Type II topoisomerases break and join 2 DNA strands simultaneously in an ATP-dependent manner. The sequence is that of DNA gyrase subunit A from Mycoplasma pneumoniae (strain ATCC 29342 / M129 / Subtype 1) (Mycoplasmoides pneumoniae).